We begin with the raw amino-acid sequence, 346 residues long: Porin Omp2a (346 aa).

Positions 1 to 22 are cleaved as a signal peptide; the sequence is MNIKSLLLGSAAALVAASGAQA.

The protein belongs to the alphaproteobacteria porin family. Monomer.

Its subcellular location is the cell outer membrane. Forms passive diffusion pores that allow small molecular weight hydrophilic materials across the outer membrane. In Brucella ovis, this protein is Porin Omp2a (omp2a).